The chain runs to 210 residues: MSAIDNYQDEEEDDIVCVNEEIETGHPRVTILHPPNERIVPPLNFCPVERYLYRSGQPSNVNFPFLLNLKLKTIIWLANEEPQDALLEFCDDHNIQLQFAAINPDGGEDDNPWDGLTEHSIRNALHTIVNSESYPLLVCCGMGRHRTGTVIGCLRRLMGWNLASVSEEYRRFTGSRGGRILVELLIEAFDITSVEIDREKAPNWLLTALS.

In terms of domain architecture, Tyrosine-protein phosphatase spans 44–204; sequence NFCPVERYLY…EIDREKAPNW (161 aa). Cys-140 functions as the Phosphocysteine intermediate in the catalytic mechanism.

This sequence belongs to the protein-tyrosine phosphatase family.

It localises to the cytoplasm. The enzyme catalyses O-phospho-L-tyrosyl-[protein] + H2O = L-tyrosyl-[protein] + phosphate. Functionally, putative tyrosine-protein phosphatase required for protection against superoxide stress. This chain is Putative tyrosine-protein phosphatase OCA1 (OCA1), found in Kluyveromyces lactis (strain ATCC 8585 / CBS 2359 / DSM 70799 / NBRC 1267 / NRRL Y-1140 / WM37) (Yeast).